A 478-amino-acid chain; its full sequence is Signal recognition particle receptor FtsY (478 aa).

2 stretches are compositionally biased toward basic and acidic residues: residues 14–33 (KDKAETEERPQEDAALERGN) and 45–56 (AEAHDAVDKDPV). The disordered stretch occupies residues 14–94 (KDKAETEERP…DAPLLPGAEL (81 aa)). A compositionally biased stretch (acidic residues) spans 71–86 (EAVDVAPAEDDEEEDA). GTP-binding positions include 283–290 (GVNGTGKT), 365–369 (DTAGR), and 429–432 (TKLD).

The protein belongs to the GTP-binding SRP family. FtsY subfamily. In terms of assembly, part of the signal recognition particle protein translocation system, which is composed of SRP and FtsY. SRP is a ribonucleoprotein composed of Ffh and a 4.5S RNA molecule.

It localises to the cell inner membrane. It is found in the cytoplasm. It catalyses the reaction GTP + H2O = GDP + phosphate + H(+). Its function is as follows. Involved in targeting and insertion of nascent membrane proteins into the cytoplasmic membrane. Acts as a receptor for the complex formed by the signal recognition particle (SRP) and the ribosome-nascent chain (RNC). Interaction with SRP-RNC leads to the transfer of the RNC complex to the Sec translocase for insertion into the membrane, the hydrolysis of GTP by both Ffh and FtsY, and the dissociation of the SRP-FtsY complex into the individual components. The protein is Signal recognition particle receptor FtsY of Agrobacterium fabrum (strain C58 / ATCC 33970) (Agrobacterium tumefaciens (strain C58)).